We begin with the raw amino-acid sequence, 625 residues long: Threonine--tRNA ligase (625 aa).

The tract at residues 1-147 (MRILLIHSDY…TIVPGEAKKE (147 aa)) is editing domain. A catalytic region spans residues 206–505 (PHVKIMLEQE…MKKGKKPMYP (300 aa)). Zn(2+) is bound by residues C298, H350, and H474.

It belongs to the class-II aminoacyl-tRNA synthetase family. As to quaternary structure, homodimer. Zn(2+) serves as cofactor.

The protein localises to the cytoplasm. It catalyses the reaction tRNA(Thr) + L-threonine + ATP = L-threonyl-tRNA(Thr) + AMP + diphosphate + H(+). Its function is as follows. Catalyzes the attachment of threonine to tRNA(Thr) in a two-step reaction: L-threonine is first activated by ATP to form Thr-AMP and then transferred to the acceptor end of tRNA(Thr). Also edits incorrectly charged L-seryl-tRNA(Thr). The sequence is that of Threonine--tRNA ligase from Thermococcus sibiricus (strain DSM 12597 / MM 739).